The chain runs to 356 residues: Competence protein ComGA (356 aa).

144–151 (GPTGSGKT) provides a ligand contact to ATP.

Belongs to the GSP E family.

The protein resides in the cell membrane. Its function is as follows. Required for uptake of DNA by competent cells. This Bacillus subtilis (strain 168) protein is Competence protein ComGA (comGA).